Reading from the N-terminus, the 208-residue chain is Cytochrome c oxidase assembly protein CtaG (208 aa).

Residues 1-19 are Cytoplasmic-facing; that stretch reads MPDTQPNVSPNPIRRRGLG. The chain crosses the membrane as a helical; Signal-anchor for type II membrane protein span at residues 20–42; it reads RDATVASICGLVVALMVGASFAA. At 43 to 208 the chain is on the periplasmic side; sequence VPFYNWFCRT…TAPDKRKGNL (166 aa).

The protein belongs to the COX11/CtaG family.

It localises to the cell inner membrane. Its function is as follows. Exerts its effect at some terminal stage of cytochrome c oxidase synthesis, probably by being involved in the insertion of the copper B into subunit I. The polypeptide is Cytochrome c oxidase assembly protein CtaG (Rhodopseudomonas palustris (strain HaA2)).